A 354-amino-acid chain; its full sequence is 4-hydroxy-3-methylbut-2-en-1-yl diphosphate synthase (flavodoxin) (354 aa).

Residues C263, C266, C298, and E305 each contribute to the [4Fe-4S] cluster site.

It belongs to the IspG family. The cofactor is [4Fe-4S] cluster.

It catalyses the reaction (2E)-4-hydroxy-3-methylbut-2-enyl diphosphate + oxidized [flavodoxin] + H2O + 2 H(+) = 2-C-methyl-D-erythritol 2,4-cyclic diphosphate + reduced [flavodoxin]. Its pathway is isoprenoid biosynthesis; isopentenyl diphosphate biosynthesis via DXP pathway; isopentenyl diphosphate from 1-deoxy-D-xylulose 5-phosphate: step 5/6. Its function is as follows. Converts 2C-methyl-D-erythritol 2,4-cyclodiphosphate (ME-2,4cPP) into 1-hydroxy-2-methyl-2-(E)-butenyl 4-diphosphate. In Fusobacterium nucleatum subsp. nucleatum (strain ATCC 25586 / DSM 15643 / BCRC 10681 / CIP 101130 / JCM 8532 / KCTC 2640 / LMG 13131 / VPI 4355), this protein is 4-hydroxy-3-methylbut-2-en-1-yl diphosphate synthase (flavodoxin).